Consider the following 86-residue polypeptide: Small ribosomal subunit protein bS16 (86 aa).

Belongs to the bacterial ribosomal protein bS16 family.

In Nostoc punctiforme (strain ATCC 29133 / PCC 73102), this protein is Small ribosomal subunit protein bS16.